The chain runs to 515 residues: Cytochrome P450 1A1 (515 aa).

Phe225 is a substrate binding site. A heme-binding site is contributed by Cys459.

This sequence belongs to the cytochrome P450 family. Heme is required as a cofactor.

It is found in the endoplasmic reticulum membrane. It localises to the microsome membrane. The catalysed reaction is an organic molecule + reduced [NADPH--hemoprotein reductase] + O2 = an alcohol + oxidized [NADPH--hemoprotein reductase] + H2O + H(+). Its function is as follows. Cytochromes P450 are a group of heme-thiolate monooxygenases. They oxidize a variety of structurally unrelated compounds, including steroids, fatty acids, and xenobiotics. The polypeptide is Cytochrome P450 1A1 (cyp1a1) (Microgadus tomcod (Atlantic tomcod)).